The sequence spans 143 residues: Large ribosomal subunit protein uL11 (143 aa).

Belongs to the universal ribosomal protein uL11 family. Part of the ribosomal stalk of the 50S ribosomal subunit. Interacts with L10 and the large rRNA to form the base of the stalk. L10 forms an elongated spine to which 2 L12 dimers bind in a sequential fashion forming a pentameric L10(L12)2(L12)2 complex. One or more lysine residues are methylated.

In terms of biological role, forms part of the ribosomal stalk which helps the ribosome interact with GTP-bound translation factors. This chain is Large ribosomal subunit protein uL11, found in Agrobacterium fabrum (strain C58 / ATCC 33970) (Agrobacterium tumefaciens (strain C58)).